The following is a 489-amino-acid chain: Ribulose bisphosphate carboxylase large chain (489 aa).

Substrate contacts are provided by N128 and T178. K180 (proton acceptor) is an active-site residue. Substrate is bound at residue K182. The Mg(2+) site is built by K206, D208, and E209. K206 carries the post-translational modification N6-carboxylysine. Residue H298 is the Proton acceptor of the active site. Residues R299, H331, and S383 each coordinate substrate.

This sequence belongs to the RuBisCO large chain family. Type I subfamily. As to quaternary structure, heterohexadecamer of 8 large chains and 8 small chains. The cofactor is Mg(2+).

It carries out the reaction 2 (2R)-3-phosphoglycerate + 2 H(+) = D-ribulose 1,5-bisphosphate + CO2 + H2O. The enzyme catalyses D-ribulose 1,5-bisphosphate + O2 = 2-phosphoglycolate + (2R)-3-phosphoglycerate + 2 H(+). Functionally, ruBisCO catalyzes two reactions: the carboxylation of D-ribulose 1,5-bisphosphate, the primary event in carbon dioxide fixation, as well as the oxidative fragmentation of the pentose substrate. Both reactions occur simultaneously and in competition at the same active site. The chain is Ribulose bisphosphate carboxylase large chain from Nitrosospira multiformis (strain ATCC 25196 / NCIMB 11849 / C 71).